The primary structure comprises 309 residues: Homoserine O-succinyltransferase (309 aa).

Residue cysteine 142 is the Acyl-thioester intermediate of the active site. Positions 163 and 192 each coordinate substrate. Catalysis depends on histidine 235, which acts as the Proton acceptor. Glutamate 237 is a catalytic residue. Arginine 249 serves as a coordination point for substrate.

This sequence belongs to the MetA family.

It is found in the cytoplasm. The enzyme catalyses L-homoserine + succinyl-CoA = O-succinyl-L-homoserine + CoA. The protein operates within amino-acid biosynthesis; L-methionine biosynthesis via de novo pathway; O-succinyl-L-homoserine from L-homoserine: step 1/1. Its function is as follows. Transfers a succinyl group from succinyl-CoA to L-homoserine, forming succinyl-L-homoserine. This Yersinia enterocolitica serotype O:8 / biotype 1B (strain NCTC 13174 / 8081) protein is Homoserine O-succinyltransferase.